A 545-amino-acid chain; its full sequence is Glucose-6-phosphate isomerase (545 aa).

Residue glutamate 351 is the Proton donor of the active site. Catalysis depends on residues histidine 382 and lysine 510.

It belongs to the GPI family.

Its subcellular location is the cytoplasm. The catalysed reaction is alpha-D-glucose 6-phosphate = beta-D-fructose 6-phosphate. It functions in the pathway carbohydrate biosynthesis; gluconeogenesis. Its pathway is carbohydrate degradation; glycolysis; D-glyceraldehyde 3-phosphate and glycerone phosphate from D-glucose: step 2/4. Its function is as follows. Catalyzes the reversible isomerization of glucose-6-phosphate to fructose-6-phosphate. This chain is Glucose-6-phosphate isomerase, found in Shewanella loihica (strain ATCC BAA-1088 / PV-4).